Here is a 120-residue protein sequence, read N- to C-terminus: NAD(P)H-quinone oxidoreductase subunit 3, chloroplastic (120 aa).

Transmembrane regions (helical) follow at residues 9-29, 64-84, and 88-108; these read IFWA…LISG, MFAL…PWAM, and VLGV…ILGL.

It belongs to the complex I subunit 3 family. NDH is composed of at least 16 different subunits, 5 of which are encoded in the nucleus.

The protein localises to the plastid. The protein resides in the chloroplast thylakoid membrane. The enzyme catalyses a plastoquinone + NADH + (n+1) H(+)(in) = a plastoquinol + NAD(+) + n H(+)(out). It catalyses the reaction a plastoquinone + NADPH + (n+1) H(+)(in) = a plastoquinol + NADP(+) + n H(+)(out). NDH shuttles electrons from NAD(P)H:plastoquinone, via FMN and iron-sulfur (Fe-S) centers, to quinones in the photosynthetic chain and possibly in a chloroplast respiratory chain. The immediate electron acceptor for the enzyme in this species is believed to be plastoquinone. Couples the redox reaction to proton translocation, and thus conserves the redox energy in a proton gradient. In Olimarabidopsis pumila (Dwarf rocket), this protein is NAD(P)H-quinone oxidoreductase subunit 3, chloroplastic.